We begin with the raw amino-acid sequence, 501 residues long: NAD(P)H-quinone oxidoreductase chain 4, chloroplastic (501 aa).

The next 14 helical transmembrane spans lie at 5-25 (FPWL…IFFL), 38-58 (ICIC…HFQL), 85-105 (GLSI…TLAA), 112-130 (SRLF…IGSF), 135-155 (LLLF…LLAM), 168-188 (FILY…GIGL), 209-229 (ALEI…LPII), 243-263 (HYST…YGLV), 275-295 (SIFS…AALT), 306-326 (IAYS…SITD), 331-351 (GAIL…FLAG), 387-407 (LALP…GIIT), 417-437 (ILIT…LLSM), and 463-483 (LFVS…PDFV).

This sequence belongs to the complex I subunit 4 family.

It is found in the plastid. The protein resides in the chloroplast thylakoid membrane. The catalysed reaction is a plastoquinone + NADH + (n+1) H(+)(in) = a plastoquinol + NAD(+) + n H(+)(out). It carries out the reaction a plastoquinone + NADPH + (n+1) H(+)(in) = a plastoquinol + NADP(+) + n H(+)(out). The chain is NAD(P)H-quinone oxidoreductase chain 4, chloroplastic from Eucalyptus globulus subsp. globulus (Tasmanian blue gum).